We begin with the raw amino-acid sequence, 288 residues long: MVLEIVLITGMSGSGKSVALHALEDAGYYCVDNLPPQLLPAFVALEHHHHGNRVAIAMDVRSATSLHQVPQELHRLRSQGVAVQSIFLDATIDTLVRRFSETRRRHPLSHDDPQQERKALVQIIDLERELLADLREASHVIDTSQIRASQLQSYVKSLMPGAQGQLTLVFQSFAFKRGIPMDADYVFDVRMLANPYYEPALRELTGLDEPVADFLQLQPDVDLMRAHIEQFLAHWLELLDRNHRSYVTVAIGCTGGQHRSVYLVERLAQSFGNRWTALKRHRELDGRQ.

10–17 (GMSGSGKS) provides a ligand contact to ATP. 59 to 62 (DVRS) is a binding site for GTP.

The protein belongs to the RapZ-like family.

Functionally, displays ATPase and GTPase activities. The protein is Nucleotide-binding protein Veis_1053 of Verminephrobacter eiseniae (strain EF01-2).